The primary structure comprises 834 residues: Ras GTPase-activating protein 3 (834 aa).

C2 domains are found at residues 1–112 and 123–263; these read MAVE…DTWF and VQGK…EAWY. An N-acetylalanine modification is found at A2. Residue Y66 is modified to Phosphotyrosine. S77 is modified (phosphoserine). T110 carries the post-translational modification Phosphothreonine. The region spanning 346–561 is the Ras-GAP domain; it reads GRVVPFISAI…DAVKNFLDLI (216 aa). The PH domain maps to 576 to 677; that stretch reads ILLKEGFMIK…WIDILTKVSQ (102 aa). A Btk-type zinc finger spans residues 679–715; it reads NQKRLTVFHPSAYLNGHWLCCRASSDTAIGCTPCTGG. H687, C698, C699, and C709 together coordinate Zn(2+). Phosphoserine is present on residues S809 and S833.

Its function is as follows. Inhibitory regulator of the Ras-cyclic AMP pathway. Binds inositol tetrakisphosphate (IP4). This Rattus norvegicus (Rat) protein is Ras GTPase-activating protein 3 (Rasa3).